The following is a 260-amino-acid chain: CD40 ligand (260 aa).

Residues 1-22 (MIETYSQTAPRSVAPGPPVSMK) lie on the Cytoplasmic side of the membrane. A helical; Signal-anchor for type II membrane protein membrane pass occupies residues 23 to 46 (IFMYLLTVFLITQMIGSALFAVYL). The Extracellular segment spans residues 47–260 (HRRLDKIEDE…GFTSFGLLKL (214 aa)). Residues 121–260 (VAAHVISEAS…GFTSFGLLKL (140 aa)) form the THD domain. Residues Cys-177 and Cys-217 are joined by a disulfide bond. Asn-239 carries an N-linked (GlcNAc...) asparagine glycan.

Belongs to the tumor necrosis factor family. In terms of assembly, homotrimer. Interacts with CD28. CD40 ligand, soluble form: Exists as either a monomer or a homotrimer. Forms a ternary complex between CD40 and integrins for CD40-CD40LG signaling. Post-translationally, the soluble form derives from the membrane form by proteolytic processing.

The protein localises to the cell membrane. The protein resides in the cell surface. Its subcellular location is the secreted. Functionally, cytokine that acts as a ligand to CD40/TNFRSF5. Costimulates T-cell proliferation and cytokine production. Its cross-linking on T-cells generates a costimulatory signal which enhances the production of IL4 and IL10 in conjunction with the TCR/CD3 ligation and CD28 costimulation. Induces the activation of NF-kappa-B. Induces the activation of kinases MAPK8 and PAK2 in T-cells. Mediates B-cell proliferation in the absence of co-stimulus as well as IgE production in the presence of IL4. Involved in immunoglobulin class switching. In terms of biological role, acts as a ligand for integrins, specifically ITGA5:ITGB1 and ITGAV:ITGB3; both integrins and the CD40 receptor are required for activation of CD40-CD40LG signaling, which have cell-type dependent effects, such as B-cell activation, NF-kappa-B signaling and anti-apoptotic signaling. In Felis catus (Cat), this protein is CD40 ligand (CD40LG).